The chain runs to 162 residues: 2-C-methyl-D-erythritol 2,4-cyclodiphosphate synthase (162 aa).

Residues aspartate 8 and histidine 10 each contribute to the a divalent metal cation site. 4-CDP-2-C-methyl-D-erythritol 2-phosphate contacts are provided by residues 8–10 (DVH) and 36–37 (HS). Histidine 44 serves as a coordination point for a divalent metal cation. 4-CDP-2-C-methyl-D-erythritol 2-phosphate contacts are provided by residues 58–60 (DIG), 63–67 (FPDTD), 102–108 (AQAPKMA), 134–137 (TTTE), phenylalanine 141, and arginine 144.

Belongs to the IspF family. In terms of assembly, homotrimer. The cofactor is a divalent metal cation.

It carries out the reaction 4-CDP-2-C-methyl-D-erythritol 2-phosphate = 2-C-methyl-D-erythritol 2,4-cyclic diphosphate + CMP. It functions in the pathway isoprenoid biosynthesis; isopentenyl diphosphate biosynthesis via DXP pathway; isopentenyl diphosphate from 1-deoxy-D-xylulose 5-phosphate: step 4/6. Functionally, involved in the biosynthesis of isopentenyl diphosphate (IPP) and dimethylallyl diphosphate (DMAPP), two major building blocks of isoprenoid compounds. Catalyzes the conversion of 4-diphosphocytidyl-2-C-methyl-D-erythritol 2-phosphate (CDP-ME2P) to 2-C-methyl-D-erythritol 2,4-cyclodiphosphate (ME-CPP) with a corresponding release of cytidine 5-monophosphate (CMP). In Yersinia pseudotuberculosis serotype IB (strain PB1/+), this protein is 2-C-methyl-D-erythritol 2,4-cyclodiphosphate synthase.